Reading from the N-terminus, the 390-residue chain is Galactokinase (390 aa).

33-36 (EHTD) contributes to the substrate binding site. ATP contacts are provided by residues serine 67 and 124 to 130 (GAGLSSS). Positions 130 and 162 each coordinate Mg(2+). Residue aspartate 174 is the Proton acceptor of the active site. Tyrosine 224 provides a ligand contact to substrate.

It belongs to the GHMP kinase family. GalK subfamily.

It is found in the cytoplasm. The catalysed reaction is alpha-D-galactose + ATP = alpha-D-galactose 1-phosphate + ADP + H(+). The protein operates within carbohydrate metabolism; galactose metabolism. Functionally, catalyzes the transfer of the gamma-phosphate of ATP to D-galactose to form alpha-D-galactose-1-phosphate (Gal-1-P). The sequence is that of Galactokinase from Exiguobacterium sibiricum (strain DSM 17290 / CCUG 55495 / CIP 109462 / JCM 13490 / 255-15).